A 945-amino-acid chain; its full sequence is Collagen-like protein 1 (945 aa).

Disordered regions lie at residues 80-226 (SLKG…SPDL) and 257-441 (GEKG…DKGE). 2 Collagen-like domains span residues 83–142 (GDPG…QGDK) and 146–205 (GDVG…KGDK). Basic and acidic residues-rich tracts occupy residues 109-145 (QGTKGEQGDQGEQGDKGDKGDKGDVGAKGDQGDKGDQ) and 168-208 (DQGD…KGDK). An N-linked (GlcNAc...) asparagine; by host glycan is attached at N211. 5 consecutive Collagen-like domains span residues 257–376 (GEKG…KGDK), 383–442 (GDKG…KGEN), 488–547 (GEKG…VGDK), 554–613 (GDKG…KGDV), and 635–694 (GDKG…VGAS). N442 carries an N-linked (GlcNAc...) asparagine; by host glycan. A compositionally biased stretch (basic and acidic residues) spans 488 to 687 (GEKGDKGDTG…DKGDKGDKGD (200 aa)). The segment at 488–712 (GEKGDKGDTG…SPTTGENGDS (225 aa)) is disordered. Over residues 703–712 (SPTTGENGDS) the composition is skewed to polar residues. N716 carries N-linked (GlcNAc...) asparagine; by host glycosylation. The segment at 733–768 (TNIKGDKGDKGDKGDKGDKGDTGDVGLKGDTGTPGS) is disordered. The segment covering 736 to 754 (KGDKGDKGDKGDKGDKGDT) has biased composition (basic and acidic residues). Low complexity predominate over residues 756 to 765 (DVGLKGDTGT).

Post-translationally, may be hydroxylated on lysine by the viral-encoded procollagen-lysine,2-oxoglutarate 5-dioxygenase.

The protein localises to the virion. May participate in the formation of a layer of cross-linked glycosylated fibrils at the viral surface thus giving it a hairy-like appearance. The polypeptide is Collagen-like protein 1 (Acanthamoeba polyphaga mimivirus (APMV)).